A 306-amino-acid chain; its full sequence is Ribosomal RNA small subunit methyltransferase A (306 aa).

Positions 37, 39, 64, 85, 115, and 134 each coordinate S-adenosyl-L-methionine.

Belongs to the class I-like SAM-binding methyltransferase superfamily. rRNA adenine N(6)-methyltransferase family. RsmA subfamily.

It is found in the cytoplasm. The enzyme catalyses adenosine(1518)/adenosine(1519) in 16S rRNA + 4 S-adenosyl-L-methionine = N(6)-dimethyladenosine(1518)/N(6)-dimethyladenosine(1519) in 16S rRNA + 4 S-adenosyl-L-homocysteine + 4 H(+). Specifically dimethylates two adjacent adenosines (A1518 and A1519) in the loop of a conserved hairpin near the 3'-end of 16S rRNA in the 30S particle. May play a critical role in biogenesis of 30S subunits. This chain is Ribosomal RNA small subunit methyltransferase A, found in Mycobacterium leprae (strain Br4923).